The primary structure comprises 1150 residues: MHPPETTTKMASVRFMVTPTKIDDIPGLSDTSPDLSSRSSSRVRFSSRESVPETSRSEPMSEMSGATTSLATVALDPPSDRTSHPQDVIEDLSQNSITGEHSQLLDDGHKKARNAYLNNSNYEEGDEYFDKNLALFEEEMDTRPKVSSLLNRMANYTNLTQGAKEHEEAENITEGKKKPTKTPQMGTFMGVYLPCLQNIFGVILFLRLTWVVGTAGVLQAFAIVLICCCCTMLTAISMSAIATNGVVPAGGSYFMISRALGPEFGGAVGLCFYLGTTFAAAMYILGAIEIFLVYIVPRAAIFHSDDALKESAAMLNNMRVYGTAFLVLMVLVVFIGVRYVNKFASLFLACVIVSILAIYAGAIKSSFAPPHFPVCMLGNRTLSSRHIDVCSKTKEINNMTVPSKLWGFFCNSSQFFNATCDEYFVHNNVTSIQGIPGLASGIITENLWSNYLPKGEIIEKPSAKSSDVLGSLNHEYVLVDITTSFTLLVGIFFPSVTGIMAGSNRSGDLKDAQKSIPIGTILAILTTSFVYLSNVVLFGACIEGVVLRDKFGDAVKGNLVVGTLSWPSPWVIVIGSFFSTCGAGLQSLTGAPRLLQAIAKDNIIPFLRVFGHSKANGEPTWALLLTAAIAELGILIASLDLVAPILSMFFLMCYLFVNLACALQTLLRTPNWRPRFRYYHWALSFMGMSICLALMFISSWYYAIVAMVIAGMIYKYIEYQGAEKEWGDGIRGLSLSAARFALLRLEEGPPHTKNWRPQLLVLLKLDEDLHVKHPRLLTFASQLKAGKGLTIVGSVIVGNFLENYGEALAAEQTIKHLMEAEKVKGFCQLVVAAKLREGISHLIQSCGLGGMKHNTVVMGWPNGWRQSEDARAWKTFIGTVRVTTAAHLALLVAKNISFFPSNVEQFSEGNIDVWWIVHDGGMLMLLPFLLKQHKVWRKCSIRIFTVAQLEDNSIQMKKDLATFLYHLRIEAEVEVVEMHDSDISAYTYERTLMMEQRSQMLRHMRLSKTERDREAQLVKDRNSMLRLTSIGSDEDEETETYQEKVHMTWTKDKYMASRGQKAKSMEGFQDLLNMRPDQSNVRRMHTAVKLNEVIVNKSHEAKLVLLNMPGPPRNPEGDENYMEFLEVLTEGLERVLLVRGGGSEVITIYS.

Topologically, residues 1 to 135 (MHPPETTTKM…DEYFDKNLAL (135 aa)) are cytoplasmic. A disordered region spans residues 20–66 (TKIDDIPGLSDTSPDLSSRSSSRVRFSSRESVPETSRSEPMSEMSGA). Residues 28–45 (LSDTSPDLSSRSSSRVRF) are compositionally biased toward low complexity. A phosphoserine mark is found at S32 and S120. Residues 136–158 (FEEEMDTRPKVSSLLNRMANYTN) form a discontinuously helical membrane-spanning segment. S147 and S148 together coordinate K(+). A Phosphoserine modification is found at S148. N151 is a chloride binding site. Residues 159-165 (LTQGAKE) lie on the Extracellular side of the membrane. A disordered region spans residues 161–181 (QGAKEHEEAENITEGKKKPTK). Residues 163-177 (AKEHEEAENITEGKK) are compositionally biased toward basic and acidic residues. Residues 166–188 (HEEAENITEGKKKPTKTPQMGTF) form a helical membrane-spanning segment. At 189–211 (MGVYLPCLQNIFGVILFLRLTWV) the chain is on the cytoplasmic side. Residues 212-245 (VGTAGVLQAFAIVLICCCCTMLTAISMSAIATNG) form a helical membrane-spanning segment. At 246–263 (VVPAGGSYFMISRALGPE) the chain is on the extracellular side. 2 helical membrane passes run 264-287 (FGGA…ILGA) and 288-316 (IEIF…AMLN). Over 317-433 (NMRVYGTAFL…FVHNNVTSIQ (117 aa)) the chain is Extracellular. A disulfide bond links C375 and C390. Residues N379, N398, N411, and N428 are each glycosylated (N-linked (GlcNAc...) asparagine). Residues C410 and C420 are joined by a disulfide bond. Residues 434–454 (GIPGLASGIITENLWSNYLPK) form a helical membrane-spanning segment. Residues I443, T444, and N446 each contribute to the K(+) site. Residues I443 and T444 each contribute to the chloride site. Residues L447 and W448 each coordinate chloride. Residues 455-464 (GEIIEKPSAK) are Cytoplasmic-facing. The helical transmembrane segment at 465 to 487 (SSDVLGSLNHEYVLVDITTSFTL) threads the bilayer. Over 488-518 (LVGIFFPSVTGIMAGSNRSGDLKDAQKSIPI) the chain is Extracellular. The helical transmembrane segment at 519–545 (GTILAILTTSFVYLSNVVLFGACIEGV) threads the bilayer. At 546–568 (VLRDKFGDAVKGNLVVGTLSWPS) the chain is on the cytoplasmic side. Helical transmembrane passes span 569-589 (PWVI…QSLT) and 590-612 (GAPR…VFGH). I603 provides a ligand contact to chloride. Residues 613-629 (SKANGEPTWALLLTAAI) lie on the Cytoplasmic side of the membrane. The next 2 helical transmembrane spans lie at 630–649 (AELG…LSMF) and 650–665 (FLMC…ALQT). The Cytoplasmic portion of the chain corresponds to 666 to 1150 (LLRTPNWRPR…GGSEVITIYS (485 aa)). A scissor helix region spans residues 682–691 (ALSFMGMSIC). Residue S736 is modified to Phosphoserine. The residue at position 778 (T778) is a Phosphothreonine. At S981 the chain carries Phosphoserine. Phosphothreonine; by OXSR1 and STK39 is present on T991. S1023, S1029, and S1032 each carry phosphoserine. The residue at position 1048 (T1048) is a Phosphothreonine; by OXSR1 and STK39. Y1121 bears the Phosphotyrosine mark. The segment at 1133–1150 (ERVLLVRGGGSEVITIYS) is interaction with CKB.

The protein belongs to the SLC12A transporter family. K/Cl co-transporter subfamily. In terms of assembly, homodimer; adopts a domain-swap conformation at the scissor helices connecting the transmembrane domain and C-terminal domain. Heterodimer with K-Cl cotransporter SLC12A5. Interacts (via C-terminus) with CKB; the interaction may be required for potassium-chloride cotransport activity. In terms of processing, phosphorylated, phosphorylation regulates transporter activity. Phosphorylated at Thr-991 and Thr-1048 by OXSR1/OSR1 and STK39/SPAK downstream of WNK kinases (WNK1, WNK2, WNK3 or WNK4), inhibiting the potassium-chloride cotransport activity. N-glycosylated. In terms of tissue distribution, expressed in brain (at protein level). Highly expressed in heart, brain and kidney. Detected at lower levels in skeletal muscle, placenta, lung and pancreas. Detected in umbilical vein endothelial cells. More abundant in kidney. As to expression, testis specific.

Its subcellular location is the cell membrane. The protein localises to the basolateral cell membrane. The catalysed reaction is K(+)(in) + chloride(in) = K(+)(out) + chloride(out). Its activity is regulated as follows. Inhibited following phosphorylation by OXSR1/OSR1 and STK39/SPAK: phosphorylation takes place downstream of WNK kinases (WNK1, WNK2, WNK3 or WNK4) in response to hyperosmotic stress and subsequent cell shrinkage. Activated by N-ethylmaleimide (NEM). Inhibited by DIOA, bumetanide and furosemide. In terms of biological role, mediates electroneutral potassium-chloride cotransport when activated by cell swelling. May contribute to cell volume homeostasis in single cells. Its function is as follows. Mediates electroneutral potassium-chloride cotransport when activated by cell swelling. May contribute to cell volume homeostasis in single cells. Mediates electroneutral potassium-chloride cotransport when activated by cell swelling. May contribute to cell volume homeostasis in single cells. The polypeptide is Solute carrier family 12 member 6 (Homo sapiens (Human)).